We begin with the raw amino-acid sequence, 277 residues long: MPHSNYETPEVILQYFAPNQDGTPPDANDLEIQYGTKNLHLAAVTLNDLRPDKDKITLTDHGLQLINHDTAMSYEDFNDPEKIKSQYYLEVAEAIKKATGAQKVICFNHNVRSEAAPRLDISKHKVDHIGPMRRVHVDVAPRGTYEAVEKRAGEALMSSIRGRWKIINSWKPLKTVQRDPLAIATGPSCPDEDLVELTRYRPDGSLSESRYSVLYDQRHKWYWVPMQKPNEMLLFNQYSDDPNRTLADRVAHCGFTLPGAEDKEIRESVEVRALVIY.

Belongs to the asaB hydroxylase/desaturase family.

The enzyme catalyses 2-[(1R,8S,14R,15R)-11-hydroxy-14,15-bis[(6E)-oct-6-en-1-yl]-3,5,9-trioxo-4,10-dioxatetracyclo[9.4.0.0(2,6).0(8,12)]pentadeca-2(6),12-dien-8-yl]acetate + 3 2-oxoglutarate + 3 O2 = phomoidride A + 3 succinate + 3 CO2 + H2O. Alpha-ketoglutarate-dependent dioxygenase; part of the gene cluster that mediates the biosynthesis of the antihypercholesterolemic agents phomoidrides which are dimeric anhydrides. Within the pathway, tstK is responsible for the iterative oxidation necessary to convert prephomoidride to phomoidride A. The pathway begins with the highly reducing polyketide synthase tstiA that catalyzes the formation of a C12-fatty acyl-ACP, starting from one acetate and 5 malonate units. The hydrolase tstM is involved in the release of the C12-fatty acyl chain from phiA. The alkylcitrate synthase (ACS) tstJ and the alkylcitrate dehydratase (ACDH) tstI then give rise to decarboxylated monomeric anhydrides by coupling the C12-fatty acyl chain with oxalacetic acid. The cyclase tstC is responsible for the dimerization of the monomeric anhydrides which leads to the production of prephomoidride that contains the characteristic bicyclo[4.3.1]deca-1,6-diene system of phomoidrides. Iterative oxidation catalyzed by the alpha-ketoglutarate-dependent dioxygenase tstK produced then phomoidride A. Finally, the methyltransferase tstE converts phomoidride A to phomoidride B via an acetalization reaction. The phosphatidylethanolamine-binding protein tstB and tstN are not essential for dimerization and their functions have still to be determined. This Talaromyces stipitatus (strain ATCC 10500 / CBS 375.48 / QM 6759 / NRRL 1006) (Penicillium stipitatum) protein is Alpha-ketoglutarate-dependent dioxygenase tstK.